Consider the following 111-residue polypeptide: Large ribosomal subunit protein uL23 (111 aa).

The protein belongs to the universal ribosomal protein uL23 family. As to quaternary structure, part of the 50S ribosomal subunit. Contacts protein L29, and trigger factor when it is bound to the ribosome.

Functionally, one of the early assembly proteins it binds 23S rRNA. One of the proteins that surrounds the polypeptide exit tunnel on the outside of the ribosome. Forms the main docking site for trigger factor binding to the ribosome. The protein is Large ribosomal subunit protein uL23 of Chlamydia trachomatis serovar L2 (strain ATCC VR-902B / DSM 19102 / 434/Bu).